The sequence spans 341 residues: Phosphatidylserine decarboxylase proenzyme (341 aa).

Active-site charge relay system; for autoendoproteolytic cleavage activity residues include Asp90, His147, and Ser254. The Schiff-base intermediate with substrate; via pyruvic acid; for decarboxylase activity role is filled by Ser254. Position 254 is a pyruvic acid (Ser); by autocatalysis (Ser254). Positions 287-341 are disordered; sequence RQDEQTPVVFPEGTELEENDAAQPPVAATSEPVQADGQNPAAEVSGQTGHKPDAP.

This sequence belongs to the phosphatidylserine decarboxylase family. PSD-B subfamily. Prokaryotic type I sub-subfamily. In terms of assembly, heterodimer of a large membrane-associated beta subunit and a small pyruvoyl-containing alpha subunit. Pyruvate is required as a cofactor. Post-translationally, is synthesized initially as an inactive proenzyme. Formation of the active enzyme involves a self-maturation process in which the active site pyruvoyl group is generated from an internal serine residue via an autocatalytic post-translational modification. Two non-identical subunits are generated from the proenzyme in this reaction, and the pyruvate is formed at the N-terminus of the alpha chain, which is derived from the carboxyl end of the proenzyme. The autoendoproteolytic cleavage occurs by a canonical serine protease mechanism, in which the side chain hydroxyl group of the serine supplies its oxygen atom to form the C-terminus of the beta chain, while the remainder of the serine residue undergoes an oxidative deamination to produce ammonia and the pyruvoyl prosthetic group on the alpha chain. During this reaction, the Ser that is part of the protease active site of the proenzyme becomes the pyruvoyl prosthetic group, which constitutes an essential element of the active site of the mature decarboxylase.

The protein localises to the cell membrane. It carries out the reaction a 1,2-diacyl-sn-glycero-3-phospho-L-serine + H(+) = a 1,2-diacyl-sn-glycero-3-phosphoethanolamine + CO2. It participates in phospholipid metabolism; phosphatidylethanolamine biosynthesis; phosphatidylethanolamine from CDP-diacylglycerol: step 2/2. Functionally, catalyzes the formation of phosphatidylethanolamine (PtdEtn) from phosphatidylserine (PtdSer). The sequence is that of Phosphatidylserine decarboxylase proenzyme from Pectobacterium atrosepticum (strain SCRI 1043 / ATCC BAA-672) (Erwinia carotovora subsp. atroseptica).